Reading from the N-terminus, the 1024-residue chain is Beta-galactosidase (1024 aa).

Residues N103 and D202 each contribute to the substrate site. D202 contacts Na(+). E417, H419, and E462 together coordinate Mg(2+). Substrate contacts are provided by residues E462 and 538–541; that span reads EYAH. E462 acts as the Proton donor in catalysis. The active-site Nucleophile is E538. N598 provides a ligand contact to Mg(2+). Residues F602 and N605 each contribute to the Na(+) site. The substrate site is built by N605 and W1000.

Belongs to the glycosyl hydrolase 2 family. As to quaternary structure, homotetramer. The cofactor is Mg(2+). Na(+) is required as a cofactor.

The enzyme catalyses Hydrolysis of terminal non-reducing beta-D-galactose residues in beta-D-galactosides.. The protein is Beta-galactosidase of Escherichia coli O9:H4 (strain HS).